We begin with the raw amino-acid sequence, 259 residues long: Tubulin-specific chaperone C (259 aa).

The C-CAP/cofactor C-like domain occupies 112-241; it reads PEVYFENDTL…DEHPILDFTW (130 aa).

It belongs to the TBCC family.

It is found in the cytoplasm. It localises to the cytoskeleton. Tubulin-folding protein; involved in the final step of the tubulin folding pathway. The protein is Tubulin-specific chaperone C (cin2) of Schizosaccharomyces pombe (strain 972 / ATCC 24843) (Fission yeast).